We begin with the raw amino-acid sequence, 176 residues long: MPVKRSLKLDDQFEENSFGPSKIMRKKSITAFSPTTGTYQLSPFSSPRTPKEQEHRDGPSNGTRKWSVLSSPARQDSTVKGSDGFMMLLSKIERSSEKTMEIMKNLSSLQALEGNRQLEDLLGVSLVPCSLKSEAKKTKELMTKVMKQKLFEKKNSRIPPKEHHPNSFEFLKAILN.

A Glycyl lysine isopeptide (Lys-Gly) (interchain with G-Cter in SUMO2) cross-link involves residue K8. The residue at position 17 (S17) is a Phosphoserine. Residues 20-50 (PSKIMRKKSITAFSPTTGTYQLSPFSSPRTP) are DD1. Residue K22 forms a Glycyl lysine isopeptide (Lys-Gly) (interchain with G-Cter in SUMO2) linkage. Position 28 is a phosphoserine (S28). Polar residues predominate over residues 34–48 (PTTGTYQLSPFSSPR). A disordered region spans residues 34 to 80 (PTTGTYQLSPFSSPRTPKEQEHRDGPSNGTRKWSVLSSPARQDSTVK). Residues 49–58 (TPKEQEHRDG) are compositionally biased toward basic and acidic residues. The segment covering 60-80 (SNGTRKWSVLSSPARQDSTVK) has biased composition (polar residues). Positions 63–66 (TRKW) match the Nuclear localization signal motif. The residue at position 71 (S71) is a Phosphoserine. Residues 82–112 (SDGFMMLLSKIERSSEKTMEIMKNLSSLQAL) adopt a coiled-coil conformation. Residues 118–122 (LEDLL) carry the LXXLL motif motif. The short motif at 171-175 (LKAIL) is the LXXIL motif element.

As to quaternary structure, homodimer; mediated by the coiled coil domain. Interacts with CCNA2 and MTA1. Interacts with NFKB1 NF-kappa-B subunit. Component of the CENPA-CAD complex, composed of CENPI, CENPK, CENPL, CENPO, CENPP, CENPQ, CENPR and CENPS. The CENPA-CAD complex interacts with the CENPA-NAC complex, at least composed of CENPA, CENPC, CENPH, CENPM, CENPN, CENPT and CENPU. Interacts with TASOR.

Its subcellular location is the nucleus. The protein resides in the chromosome. It localises to the centromere. It is found in the kinetochore. Transcription coregulator that can have both coactivator and corepressor functions. Involved in the coactivation of nuclear receptors for retinoid X (RXRs) and thyroid hormone (TRs) in a ligand-dependent fashion. In contrast, it does not coactivate nuclear receptors for retinoic acid, vitamin D, progesterone receptor, nor glucocorticoid. Acts as a coactivator for estrogen receptor alpha. Acts as a transcriptional corepressor via its interaction with the NFKB1 NF-kappa-B subunit, possibly by interfering with the transactivation domain of NFKB1. Induces apoptosis in breast cancer cells, but not in other cancer cells, via a caspase-2 mediated pathway that involves mitochondrial membrane permeabilization but does not require other caspases. May also act as an inhibitor of cyclin A-associated kinase. Also acts a component of the CENPA-CAD (nucleosome distal) complex, a complex recruited to centromeres which is involved in assembly of kinetochore proteins, mitotic progression and chromosome segregation. May be involved in incorporation of newly synthesized CENPA into centromeres via its interaction with the CENPA-NAC complex. This chain is Centromere protein R (Itgb3bp), found in Rattus norvegicus (Rat).